Consider the following 115-residue polypeptide: Large ribosomal subunit protein bL20c (115 aa).

Belongs to the bacterial ribosomal protein bL20 family.

It is found in the plastid. The protein resides in the chloroplast. In terms of biological role, binds directly to 23S ribosomal RNA and is necessary for the in vitro assembly process of the 50S ribosomal subunit. It is not involved in the protein synthesizing functions of that subunit. In Mesostigma viride (Green alga), this protein is Large ribosomal subunit protein bL20c (rpl20).